Reading from the N-terminus, the 600-residue chain is NADH-quinone oxidoreductase subunit C/D (600 aa).

Residues 1–190 (MIDLMPKKNT…EPFFLNEQKE (190 aa)) form an NADH dehydrogenase I subunit C region. The NADH dehydrogenase I subunit D stretch occupies residues 214–600 (EFMFLNLGPN…IDFVMSDVDR (387 aa)).

This sequence in the N-terminal section; belongs to the complex I 30 kDa subunit family. It in the C-terminal section; belongs to the complex I 49 kDa subunit family. In terms of assembly, NDH-1 is composed of 13 different subunits. Subunits NuoB, CD, E, F, and G constitute the peripheral sector of the complex.

It is found in the cell membrane. The enzyme catalyses a quinone + NADH + 5 H(+)(in) = a quinol + NAD(+) + 4 H(+)(out). In terms of biological role, NDH-1 shuttles electrons from NADH, via FMN and iron-sulfur (Fe-S) centers, to quinones in the respiratory chain. The immediate electron acceptor for the enzyme in this species is believed to be ubiquinone. Couples the redox reaction to proton translocation (for every two electrons transferred, four hydrogen ions are translocated across the cytoplasmic membrane), and thus conserves the redox energy in a proton gradient. The polypeptide is NADH-quinone oxidoreductase subunit C/D (Buchnera aphidicola subsp. Acyrthosiphon pisum (strain 5A)).